The following is a 102-amino-acid chain: Small ribosomal subunit protein uS10 (102 aa).

The protein belongs to the universal ribosomal protein uS10 family. In terms of assembly, part of the 30S ribosomal subunit.

In terms of biological role, involved in the binding of tRNA to the ribosomes. This is Small ribosomal subunit protein uS10 from Desulforamulus reducens (strain ATCC BAA-1160 / DSM 100696 / MI-1) (Desulfotomaculum reducens).